The following is a 411-amino-acid chain: Secretion apparatus protein BsaZ (411 aa).

4 consecutive transmembrane segments (helical) span residues 28–48 (IVALIVIATGALAAPALVDLT), 80–100 (IAAPFVLLCAAAGALPSLVQS), 137–157 (ALLYVGVFALTVRVFAGLYHA), and 175–195 (IVLTVRLVLLFLLCALPVLIL). The tract at residues 341 to 411 (AANRGGPPPE…APARTGDQNA (71 aa)) is disordered. A compositionally biased stretch (low complexity) spans 370 to 404 (DACADNAFPDDAPPGAAAPNAGSPDGPAPDGGAPA).

It belongs to the type III secretion exporter family.

The protein localises to the cell membrane. Functionally, part of the bsa type III secretion system, is involved in the intracellular replication of invading bacteria inside the host cell. Probably necessary for the lysis of the vacuole membrane and escape into the host cell cytoplasm. The sequence is that of Secretion apparatus protein BsaZ (bsaZ) from Burkholderia pseudomallei (strain 1026b).